A 1461-amino-acid chain; its full sequence is Neogenin (1461 aa).

The first 33 residues, 1–33 (MAAERGARRLLSTPSFWLYCLLLLGRRAPGAAA), serve as a signal peptide directing secretion. Over 34 to 1105 (ARSGSAPQSP…PTSPLDSNML (1072 aa)) the chain is Extracellular. 4 Ig-like C2-type domains span residues 52-141 (PFYF…TIIS), 152-238 (PRFT…VELK), 243-336 (PEVI…AELT), and 341-426 (PEFL…AQLI). Asparagine 73 carries N-linked (GlcNAc...) asparagine glycosylation. Cystine bridges form between cysteine 74-cysteine 129, cysteine 173-cysteine 221, and cysteine 270-cysteine 320. Asparagine 210 is a glycosylation site (N-linked (GlcNAc...) asparagine). N-linked (GlcNAc...) asparagine glycosylation occurs at asparagine 326. Cysteine 362 and cysteine 410 are disulfide-bonded. 6 consecutive Fibronectin type-III domains span residues 441 to 535 (APRD…TQPE), 541 to 631 (PAPN…TLSD), 636 to 731 (APQN…TFES), 741 to 831 (VPSS…RPHT), 856 to 952 (PPVG…TFEL), and 957 to 1054 (PPKD…TPKA). 2 N-linked (GlcNAc...) asparagine glycosylation sites follow: asparagine 470 and asparagine 489. Asparagine 639 and asparagine 715 each carry an N-linked (GlcNAc...) asparagine glycan. A glycan (N-linked (GlcNAc...) asparagine) is linked at asparagine 909. The interval 1041-1097 (GPMSEAVQFRTPKADSSDKMPNDQASGSGGKGSRLPDLGSDYKPPMSGSNSPHGSPT) is disordered. The segment covering 1052–1061 (PKADSSDKMP) has biased composition (basic and acidic residues). The segment covering 1087-1097 (SGSNSPHGSPT) has biased composition (polar residues). The chain crosses the membrane as a helical span at residues 1106 to 1126 (LVIIVSVGVITIVVVVIIAVF). Topologically, residues 1127 to 1461 (CTRRTTSHQK…MKDLNAITTA (335 aa)) are cytoplasmic. 4 disordered regions span residues 1138-1160 (KRAACKSVNGSHKYKGNSKDVKP), 1174-1206 (PIDKSPDPNPIMTDTPIPRNSQDITPVDNSMDS), 1235-1276 (PKMM…PARS), and 1289-1381 (TSMS…ALPS). A phosphoserine mark is found at serine 1178 and serine 1194. Polar residues predominate over residues 1191-1206 (PRNSQDITPVDNSMDS). Threonine 1198 is modified (phosphothreonine). Polar residues-rich tracts occupy residues 1289 to 1322 (TSMSLSDRANSTESVRNTPSTDTMPASSSQTCCT) and 1330 to 1349 (ATSSSYLASSQEEDSGQSLP). The segment covering 1366–1375 (AIPPPGPPTY) has biased composition (pro residues). Serine 1401 bears the Phosphoserine mark. A Phosphothreonine modification is found at threonine 1404. Phosphoserine occurs at positions 1432, 1434, and 1435.

The protein belongs to the immunoglobulin superfamily. DCC family. In terms of assembly, interacts with MYO10. Interacts with RGMA and RGMB. Interacts with BMP2, BMP4, BMP6, and BMP7. As to expression, widely expressed and also in cancer cell lines.

It localises to the cell membrane. Multi-functional cell surface receptor regulating cell adhesion in many diverse developmental processes, including neural tube and mammary gland formation, myogenesis and angiogenesis. Receptor for members of the BMP, netrin, and repulsive guidance molecule (RGM) families. Netrin-Neogenin interactions result in a chemoattractive axon guidance response and cell-cell adhesion, the interaction between NEO1/Neogenin and RGMa and RGMb induces a chemorepulsive response. The protein is Neogenin (NEO1) of Homo sapiens (Human).